The primary structure comprises 372 residues: MVFPWRCEGTYWGSRNILKLWVWTLLCCDFLIHHGTHCWTYHYSEKPMNWENARKFCKQNYTDLVAIQNKREIEYLENTLPKSPYYYWIGIRKIGKMWTWVGTNKTLTKEAENWGAGEPNNKKSKEDCVEIYIKRERDSGKWNDDACHKRKAALCYTASCQPGSCNGRGECVETINNHTCICDAGYYGPQCQYVVQCEPLEAPELGTMDCIHPLGNFSFQSKCAFNCSEGRELLGTAETQCGASGNWSSPEPICQVVQCEPLEAPELGTMDCIHPLGNFSFQSKCAFNCSEGRELLGTAETQCGASGNWSSPEPICQETNRSFSKIKEGDYNPLFIPVAVMVTAFSGLAFLIWLARRLKKGKKSQERMDDPY.

Residues 1 to 28 (MVFPWRCEGTYWGSRNILKLWVWTLLCC) form the signal peptide. Positions 29-38 (DFLIHHGTHC) are excised as a propeptide. Topologically, residues 39–332 (WTYHYSEKPM…FSKIKEGDYN (294 aa)) are extracellular. A C-type lectin domain is found at 55 to 155 (KFCKQNYTDL…ACHKRKAALC (101 aa)). Cystine bridges form between C57–C155, C128–C147, C128–C160, C160–C171, C165–C180, C182–C191, C197–C241, C227–C254, C259–C303, and C289–C316. N60 and N104 each carry an N-linked (GlcNAc...) asparagine glycan. Ca(2+)-binding residues include E118, N120, E126, N143, and D144. The region spanning 156 to 192 (YTASCQPGSCNGRGECVETINNHTCICDAGYYGPQCQ) is the EGF-like domain. An N-linked (GlcNAc...) asparagine glycan is attached at N177. Sushi domains follow at residues 195–256 (VQCE…ICQV) and 257–318 (VQCE…ICQE). N-linked (GlcNAc...) asparagine glycans are attached at residues N216, N226, N246, N278, N288, N308, and N320. The helical transmembrane segment at 333–355 (PLFIPVAVMVTAFSGLAFLIWLA) threads the bilayer. The Cytoplasmic segment spans residues 356–372 (RRLKKGKKSQERMDDPY).

The protein belongs to the selectin/LECAM family. In terms of assembly, interaction with SELPLG/PSGL1 and PODXL2 is required for promoting recruitment and rolling of leukocytes. This interaction is dependent on the sialyl Lewis X glycan modification of SELPLG and PODXL2, and tyrosine sulfation modifications of SELPLG. Sulfation on 'Tyr-51' of SELPLG is important for L-selectin binding. N-glycosylated. Predominantly expressed in lymphoid tissue.

It localises to the cell membrane. In terms of biological role, calcium-dependent lectin that mediates cell adhesion by binding to glycoproteins on neighboring cells. Mediates the adherence of lymphocytes to endothelial cells of high endothelial venules in peripheral lymph nodes. Promotes initial tethering and rolling of leukocytes in endothelia. The protein is L-selectin (Sell) of Mus musculus (Mouse).